Reading from the N-terminus, the 476-residue chain is Cys-Gly metallodipeptidase dug1 (476 aa).

A Zn(2+)-binding site is contributed by His-99. Asp-101 is a catalytic residue. Asp-133 contributes to the Zn(2+) binding site. Glu-167 serves as the catalytic Proton acceptor. 3 residues coordinate Zn(2+): Glu-168, Asp-196, and His-446.

It belongs to the peptidase M20A family. Homodimer. Component of the GSH degradosomal complex. Requires Zn(2+) as cofactor. The cofactor is Mn(2+).

The protein localises to the cytoplasm. Functionally, catalytic component of the GSH degradosomal complex involved in the degradation of glutathione (GSH) and other peptides containing a gamma-glu-X bond. Has a Gly-Cys dipeptidase activity. In Schizosaccharomyces pombe (strain 972 / ATCC 24843) (Fission yeast), this protein is Cys-Gly metallodipeptidase dug1 (dug1).